We begin with the raw amino-acid sequence, 579 residues long: Probable methyl-accepting chemotaxis protein BT9727_0355 (579 aa).

The Cytoplasmic portion of the chain corresponds to 1 to 13 (MKKYWHKLSFLQK). Residues 14-34 (NVLLTVLVILTLVGTMGALSF) traverse the membrane as a helical segment. The Extracellular segment spans residues 35–198 (NMFQNSMMSI…ASIVPSTKEK (164 aa)). The chain crosses the membrane as a helical span at residues 199 to 219 (FIIQGLMFICISVLIATVIQF). Over 220–579 (LIVRNALAPL…LQELIGEFKS (360 aa)) the chain is Cytoplasmic. The HAMP domain occupies 223-274 (RNALAPLRDLREGLRRVGEGDLNIKLEERSDDIGIINSYFNNTIEKFKGIID). Position 289 is a glutamate methyl ester (Glu) (Glu289). The Methyl-accepting transducer domain maps to 293–529 (STKENSMAVQ…NIVRVVNELS (237 aa)). Glu548 carries the post-translational modification Glutamate methyl ester (Glu).

This sequence belongs to the methyl-accepting chemotaxis (MCP) protein family.

The protein resides in the cell membrane. In terms of biological role, chemotactic-signal transducers respond to changes in the concentration of attractants and repellents in the environment, transduce a signal from the outside to the inside of the cell, and facilitate sensory adaptation through the variation of the level of methylation. This is Probable methyl-accepting chemotaxis protein BT9727_0355 from Bacillus thuringiensis subsp. konkukian (strain 97-27).